Consider the following 60-residue polypeptide: Metallothionein (60 aa).

N-acetylmethionine is present on methionine 1. The interval 1 to 28 is beta; that stretch reads MDPCECSKTGTCNCGGSCTCKNCSCTTC. Cysteine 4, cysteine 6, cysteine 12, cysteine 14, cysteine 18, cysteine 20, cysteine 23, cysteine 25, cysteine 28, cysteine 32, cysteine 33, cysteine 35, cysteine 36, cysteine 40, cysteine 43, cysteine 47, cysteine 49, cysteine 54, cysteine 58, and cysteine 59 together coordinate a divalent metal cation. The interval 29–60 is alpha; sequence TKSCCPCCPSGCPKCASGCVCKGKTCDTTCCQ.

Belongs to the metallothionein superfamily. Type 1 family.

In terms of biological role, metallothioneins have a high content of cysteine residues that bind various heavy metals. The sequence is that of Metallothionein (mt) from Pseudopleuronectes americanus (Winter flounder).